Reading from the N-terminus, the 195-residue chain is ATP-dependent Clp protease proteolytic subunit (195 aa).

Ser98 (nucleophile) is an active-site residue. Residue His123 is part of the active site.

The protein belongs to the peptidase S14 family. In terms of assembly, fourteen ClpP subunits assemble into 2 heptameric rings which stack back to back to give a disk-like structure with a central cavity, resembling the structure of eukaryotic proteasomes.

The protein localises to the cytoplasm. The enzyme catalyses Hydrolysis of proteins to small peptides in the presence of ATP and magnesium. alpha-casein is the usual test substrate. In the absence of ATP, only oligopeptides shorter than five residues are hydrolyzed (such as succinyl-Leu-Tyr-|-NHMec, and Leu-Tyr-Leu-|-Tyr-Trp, in which cleavage of the -Tyr-|-Leu- and -Tyr-|-Trp bonds also occurs).. Cleaves peptides in various proteins in a process that requires ATP hydrolysis. Has a chymotrypsin-like activity. Plays a major role in the degradation of misfolded proteins. The polypeptide is ATP-dependent Clp protease proteolytic subunit (Caldanaerobacter subterraneus subsp. tengcongensis (strain DSM 15242 / JCM 11007 / NBRC 100824 / MB4) (Thermoanaerobacter tengcongensis)).